The chain runs to 213 residues: Uracil phosphoribosyltransferase (213 aa).

Residues Arg-78, Arg-103, and 130–138 (DPMLATGGS) each bind 5-phospho-alpha-D-ribose 1-diphosphate. Residues Ile-193 and 198–200 (GDA) contribute to the uracil site. Asp-199 lines the 5-phospho-alpha-D-ribose 1-diphosphate pocket.

It belongs to the UPRTase family. It depends on Mg(2+) as a cofactor.

It catalyses the reaction UMP + diphosphate = 5-phospho-alpha-D-ribose 1-diphosphate + uracil. Its pathway is pyrimidine metabolism; UMP biosynthesis via salvage pathway; UMP from uracil: step 1/1. With respect to regulation, allosterically activated by GTP. Its function is as follows. Catalyzes the conversion of uracil and 5-phospho-alpha-D-ribose 1-diphosphate (PRPP) to UMP and diphosphate. In Bordetella bronchiseptica (strain ATCC BAA-588 / NCTC 13252 / RB50) (Alcaligenes bronchisepticus), this protein is Uracil phosphoribosyltransferase.